Reading from the N-terminus, the 167-residue chain is NADH-quinone oxidoreductase subunit I 1 (167 aa).

4Fe-4S ferredoxin-type domains follow at residues 52-82 (LQRD…IEAA) and 98-127 (KVYN…HGHG). [4Fe-4S] cluster contacts are provided by C62, C65, C68, C72, C107, C110, C113, and C117. The interval 148-167 (PVPPGAKPPSMADEVPAGAH) is disordered.

It belongs to the complex I 23 kDa subunit family. In terms of assembly, NDH-1 is composed of 14 different subunits. Subunits NuoA, H, J, K, L, M, N constitute the membrane sector of the complex. [4Fe-4S] cluster serves as cofactor.

Its subcellular location is the cell inner membrane. The catalysed reaction is a quinone + NADH + 5 H(+)(in) = a quinol + NAD(+) + 4 H(+)(out). Its function is as follows. NDH-1 shuttles electrons from NADH, via FMN and iron-sulfur (Fe-S) centers, to quinones in the respiratory chain. The immediate electron acceptor for the enzyme in this species is believed to be ubiquinone. Couples the redox reaction to proton translocation (for every two electrons transferred, four hydrogen ions are translocated across the cytoplasmic membrane), and thus conserves the redox energy in a proton gradient. The protein is NADH-quinone oxidoreductase subunit I 1 of Solibacter usitatus (strain Ellin6076).